We begin with the raw amino-acid sequence, 292 residues long: 4-diphosphocytidyl-2-C-methyl-D-erythritol kinase (292 aa).

Lysine 11 is a catalytic residue. 95–105 (PVSAGLAGGSS) is an ATP binding site. Aspartate 137 is a catalytic residue.

It belongs to the GHMP kinase family. IspE subfamily.

The catalysed reaction is 4-CDP-2-C-methyl-D-erythritol + ATP = 4-CDP-2-C-methyl-D-erythritol 2-phosphate + ADP + H(+). The protein operates within isoprenoid biosynthesis; isopentenyl diphosphate biosynthesis via DXP pathway; isopentenyl diphosphate from 1-deoxy-D-xylulose 5-phosphate: step 3/6. Catalyzes the phosphorylation of the position 2 hydroxy group of 4-diphosphocytidyl-2C-methyl-D-erythritol. This chain is 4-diphosphocytidyl-2-C-methyl-D-erythritol kinase, found in Alkaliphilus oremlandii (strain OhILAs) (Clostridium oremlandii (strain OhILAs)).